Reading from the N-terminus, the 125-residue chain is Large ribosomal subunit protein bL12 (125 aa).

The protein belongs to the bacterial ribosomal protein bL12 family. Homodimer. Part of the ribosomal stalk of the 50S ribosomal subunit. Forms a multimeric L10(L12)X complex, where L10 forms an elongated spine to which 2 to 4 L12 dimers bind in a sequential fashion. Binds GTP-bound translation factors.

In terms of biological role, forms part of the ribosomal stalk which helps the ribosome interact with GTP-bound translation factors. Is thus essential for accurate translation. The sequence is that of Large ribosomal subunit protein bL12 from Chlorobium limicola (strain DSM 245 / NBRC 103803 / 6330).